The following is a 176-amino-acid chain: Large ribosomal subunit protein uL16 (176 aa).

It belongs to the universal ribosomal protein uL16 family.

In Thermoplasma acidophilum (strain ATCC 25905 / DSM 1728 / JCM 9062 / NBRC 15155 / AMRC-C165), this protein is Large ribosomal subunit protein uL16.